Consider the following 101-residue polypeptide: Ubiquitin-related modifier 1 homolog 1 (101 aa).

Glycine 101 is modified (1-thioglycine). Residue glycine 101 forms a Glycyl lysine isopeptide (Gly-Lys) (interchain with K-? in acceptor proteins) linkage.

This sequence belongs to the URM1 family. Post-translationally, C-terminal thiocarboxylation occurs in 2 steps, it is first acyl-adenylated (-COAMP) via the hesA/moeB/thiF part of the MOCS3 homolog, then thiocarboxylated (-COSH) via the rhodanese domain of the MOCS3 homolog.

Its subcellular location is the cytoplasm. The protein operates within tRNA modification; 5-methoxycarbonylmethyl-2-thiouridine-tRNA biosynthesis. In terms of biological role, acts as a sulfur carrier required for 2-thiolation of mcm(5)S(2)U at tRNA wobble positions of cytosolic tRNA(Lys), tRNA(Glu) and tRNA(Gln). Serves as sulfur donor in tRNA 2-thiolation reaction by being thiocarboxylated (-COSH) at its C-terminus by MOCS3. The sulfur is then transferred to tRNA to form 2-thiolation of mcm(5)S(2)U. Also acts as a ubiquitin-like protein (UBL) that is covalently conjugated via an isopeptide bond to lysine residues of target proteins. The thiocarboxylated form serves as substrate for conjugation and oxidative stress specifically induces the formation of UBL-protein conjugates. The polypeptide is Ubiquitin-related modifier 1 homolog 1 (Arabidopsis thaliana (Mouse-ear cress)).